We begin with the raw amino-acid sequence, 139 residues long: Large ribosomal subunit protein uL16 (139 aa).

Basic residues predominate over residues Met1–Arg17. Residues Met1–Gly24 are disordered.

It belongs to the universal ribosomal protein uL16 family. As to quaternary structure, part of the 50S ribosomal subunit.

Functionally, binds 23S rRNA and is also seen to make contacts with the A and possibly P site tRNAs. The chain is Large ribosomal subunit protein uL16 from Clavibacter michiganensis subsp. michiganensis (strain NCPPB 382).